The following is a 243-amino-acid chain: MGPREPFVVFPAIDLKGGRCVRLRQGDFGRERVYDADPVGRAREWERRGARALHVVDLDGAREGRPVQLALIREIARAAGVPLQVGGGIRTLEDVRAARRAGAARVVVGTAAVADRDFRLRALEELGADLVVAVDAREGVVATHGWQRQSGVGAAELAGELAAEGVRAVLFTDISRDGTGEGAALERTAEVAGIIPTIASGGVRGAGDIRALARTPGVVGAVVGTALYEGQATLEELLAAAGG.

Catalysis depends on Asp14, which acts as the Proton acceptor. Asp135 (proton donor) is an active-site residue.

This sequence belongs to the HisA/HisF family.

It localises to the cytoplasm. It catalyses the reaction 1-(5-phospho-beta-D-ribosyl)-5-[(5-phospho-beta-D-ribosylamino)methylideneamino]imidazole-4-carboxamide = 5-[(5-phospho-1-deoxy-D-ribulos-1-ylimino)methylamino]-1-(5-phospho-beta-D-ribosyl)imidazole-4-carboxamide. The protein operates within amino-acid biosynthesis; L-histidine biosynthesis; L-histidine from 5-phospho-alpha-D-ribose 1-diphosphate: step 4/9. The polypeptide is 1-(5-phosphoribosyl)-5-[(5-phosphoribosylamino)methylideneamino] imidazole-4-carboxamide isomerase (Rubrobacter xylanophilus (strain DSM 9941 / JCM 11954 / NBRC 16129 / PRD-1)).